A 689-amino-acid chain; its full sequence is Glycine--tRNA ligase beta subunit (689 aa).

Belongs to the class-II aminoacyl-tRNA synthetase family. As to quaternary structure, tetramer of two alpha and two beta subunits.

The protein resides in the cytoplasm. The enzyme catalyses tRNA(Gly) + glycine + ATP = glycyl-tRNA(Gly) + AMP + diphosphate. In Mannheimia succiniciproducens (strain KCTC 0769BP / MBEL55E), this protein is Glycine--tRNA ligase beta subunit.